Here is a 1357-residue protein sequence, read N- to C-terminus: DNA-directed RNA polymerase subunit beta (1357 aa).

It belongs to the RNA polymerase beta chain family. The RNAP catalytic core consists of 2 alpha, 1 beta, 1 beta' and 1 omega subunit. When a sigma factor is associated with the core the holoenzyme is formed, which can initiate transcription.

It catalyses the reaction RNA(n) + a ribonucleoside 5'-triphosphate = RNA(n+1) + diphosphate. Functionally, DNA-dependent RNA polymerase catalyzes the transcription of DNA into RNA using the four ribonucleoside triphosphates as substrates. This chain is DNA-directed RNA polymerase subunit beta, found in Pseudomonas aeruginosa (strain LESB58).